We begin with the raw amino-acid sequence, 2869 residues long: uncharacterized protein (2869 aa).

The span at M1–D10 shows a compositional bias: low complexity. Disordered regions lie at residues M1–K132, N171–R349, F380–S485, K498–K517, N690–Q812, I860–N1074, I1108–S1175, S1188–D1216, V1224–T1243, E1340–I1448, I1476–Y1704, N1731–F1832, and D2725–E2773. A compositionally biased stretch (polar residues) spans H14 to F25. 5 stretches are compositionally biased toward low complexity: residues G26–N124, N171–Y348, N388–N414, Y421–K446, and K454–N478. The span at H505–K514 shows a compositional bias: basic and acidic residues. 2 stretches are compositionally biased toward low complexity: residues N690–Q707 and P714–Q749. Positions Y750–Q763 are enriched in basic and acidic residues. Positions N764 to Q781 are enriched in low complexity. Residues Y782–Q795 show a composition bias toward basic and acidic residues. Low complexity-rich tracts occupy residues N796–Q812, I860–N891, D898–D911, C921–N991, and N1000–N1074. A compositionally biased stretch (low complexity) spans S1188 to I1212. A compositionally biased stretch (polar residues) spans T1230–T1243. Composition is skewed to low complexity over residues D1377–I1448 and I1476–D1639. Acidic residues predominate over residues I1640 to N1659. Composition is skewed to low complexity over residues V1660–Y1704, N1731–S1823, and S2739–S2754. A compositionally biased stretch (acidic residues) spans N2758–E2773.

This is an uncharacterized protein from Dictyostelium discoideum (Social amoeba).